A 38-amino-acid chain; its full sequence is MVEALLSGIVLGSIPITLAGSFVTAYPQYRRGDQLDLR.

A helical membrane pass occupies residues 5–25 (LLSGIVLGSIPITLAGSFVTA).

Belongs to the PetG family. The 4 large subunits of the cytochrome b6-f complex are cytochrome b6, subunit IV (17 kDa polypeptide, PetD), cytochrome f and the Rieske protein, while the 4 small subunits are PetG, PetL, PetM and PetN. The complex functions as a dimer.

It localises to the plastid. The protein resides in the chloroplast thylakoid membrane. Component of the cytochrome b6-f complex, which mediates electron transfer between photosystem II (PSII) and photosystem I (PSI), cyclic electron flow around PSI, and state transitions. PetG is required for either the stability or assembly of the cytochrome b6-f complex. The chain is Cytochrome b6-f complex subunit 5 from Huperzia lucidula (Shining clubmoss).